A 347-amino-acid chain; its full sequence is Leucine-rich repeat-containing protein 69 (347 aa).

LRR repeat units follow at residues 15 to 37 (NTKI…EKLP), 38 to 60 (NLKT…RTLT), 61 to 82 (QLTL…IKYL), 84 to 105 (SLKN…VFNG), 108 to 129 (RLIM…IGRL), 131 to 152 (SLTY…LCSL), 154 to 175 (HLSE…IKFL), 177 to 198 (NLQQ…ICHL), and 200 to 222 (KLRV…QNLR).

This sequence belongs to the LRRC69 family.

This chain is Leucine-rich repeat-containing protein 69 (Lrrc69), found in Mus musculus (Mouse).